The chain runs to 458 residues: MAAMPLKAQYQEMVTFEDVAVHFTKTEWTGLSPAQRALYRSVMLENFGNLTALGYPVPKPALISLLERGDMAWGLEAQDDPPAERTKNVCKDVETNIDSESTLIQGISEERDGMMSHGQLKSVPQRTDFPETRNVEKHQDIPTVKNIQGKVPRIPCARKPFICEECGKSFSYFSYYARHQRIHTGEKPFECSECGKAFNGNSSLIRHQRIHTGERPYQCEECGRAFNDNANLIRHQRIHSGDRPYYCTECGNSFTSSSEFVIHQRIHTGEKPYECNECGKAFVGNSPLLRHQKIHTGEKPYECNECGKSFGRTSHLSQHQRIHTGEKPYSCKVCGQAFNFHTKLTRHQRIHSEEKPFDCVDCGKAFSAQEQLKRHLRIHTQESSYVCDECGKALTSKRNLHQHQRIHTGEKPYECSKYEKAFGTSSQLGHLEHVYSGEKPVLDICRFGLPEFFTPFYW.

The 72-residue stretch at 14–85 folds into the KRAB domain; sequence VTFEDVAVHF…EAQDDPPAER (72 aa). 9 C2H2-type zinc fingers span residues 161 to 183, 189 to 211, 217 to 239, 245 to 267, 273 to 295, 301 to 323, 329 to 351, 357 to 379, and 385 to 407; these read FICE…QRIH, FECS…QRIH, YQCE…QRIH, YYCT…QRIH, YECN…QKIH, YECN…QRIH, YSCK…QRIH, FDCV…LRIH, and YVCD…QRIH. The C2H2-type 10; atypical zinc-finger motif lies at 413 to 433; it reads YECSKYEKAFGTSSQLGHLEH.

It belongs to the krueppel C2H2-type zinc-finger protein family.

It localises to the nucleus. Functionally, may be involved in transcriptional regulation. In Homo sapiens (Human), this protein is Zinc finger protein 19 (ZNF19).